Consider the following 443-residue polypeptide: Phosphatidate cytidylyltransferase 2 (443 aa).

Over residues 1–38 the composition is skewed to basic and acidic residues; the sequence is MTELRQRAVREDAPPEDKESESEAKLDGETASDSESRA. The tract at residues 1-51 is disordered; it reads MTELRQRAVREDAPPEDKESESEAKLDGETASDSESRAETAPPPTSIDDTP. S20 is modified (phosphoserine). At T30 the chain carries Phosphothreonine. Phosphoserine occurs at positions 32, 34, and 36. T50 is modified (phosphothreonine). The next 6 helical transmembrane spans lie at 78–98, 129–149, 165–185, 212–232, 261–281, and 338–358; these read MIAF…MIVM, WYFL…DYFF, HRFI…LSLV, LVIH…SCVI, GFIG…YVMS, and SALS…ASGF.

The protein belongs to the CDS family. Homodimer.

The protein resides in the endoplasmic reticulum membrane. It catalyses the reaction a 1,2-diacyl-sn-glycero-3-phosphate + CTP + H(+) = a CDP-1,2-diacyl-sn-glycerol + diphosphate. It carries out the reaction 1-octadecanoyl-2-(5Z,8Z,11Z,14Z-eicosatetraenoyl)-sn-glycero-3-phosphate + CTP + H(+) = 1-octadecanoyl-2-(5Z,8Z,11Z,14Z-eicosatetraenoyl)-sn-glycero-3-cytidine-5'-diphosphate + diphosphate. The catalysed reaction is 1-octadecanoyl-2-(9Z,12Z-octadecadienoyl)-sn-glycero-3-phosphate + CTP + H(+) = 1-octadecanoyl-2-(9Z,12Z-octadecadienoyl)-sn-glycero-3-cytidine-5'-diphosphate + diphosphate. The enzyme catalyses 1-hexadecanoyl-2-(5Z,8Z,11Z,14Z-eicosatetraenoyl)-sn-glycero-3-phosphate + CTP + H(+) = 1-hexadecanoyl-2-(5Z,8Z,11Z,14Z-eicosatetraenoyl)-sn-glycero-3-cytidine-5'-diphosphate + diphosphate. It catalyses the reaction 1,2-di-(5Z,8Z,11Z,14Z)-eicosatetraenoyl-sn-glycero-3-phosphate + CTP + H(+) = 1,2-di-(5Z,8Z,11Z,14Z-eicosatetraenoyl)-sn-glycero-3-cytidine-5'-diphosphate + diphosphate. It carries out the reaction 1-octadecanoyl-2-(9Z-octadecenoyl)-sn-glycero-3-phosphate + CTP + H(+) = 1-octadecanoyl-2-(9Z-octadecenoyl)-sn-glycero-3-cytidine-5'-diphosphate + diphosphate. The catalysed reaction is 1-octadecanoyl-2-(4Z,7Z,10Z,13Z,16Z,19Z-docosahexaenoyl)-sn-glycero-3-phosphate + CTP + H(+) = 1-octadecanoyl-2-(4Z,7Z,10Z,13Z,16Z,19Z-docosahexaenoyl)-sn-glycero-3-cytidine-5'-diphosphate + diphosphate. The enzyme catalyses 1,2-di-(9Z,12Z-octadecadienoyl)-sn-glycero-3-phosphate + CTP + H(+) = 1,2-di-(9Z,12Z-octadecadienoyl)-sn-glycero-3-cytidine-5'-diphosphate + diphosphate. It catalyses the reaction 1,2-di-(9Z-octadecenoyl)-sn-glycero-3-phosphate + CTP + H(+) = 1,2-di-(9Z-octadecenoyl)-sn-glycero-3-cytidine-5'-diphosphate + diphosphate. The protein operates within phospholipid metabolism; CDP-diacylglycerol biosynthesis; CDP-diacylglycerol from sn-glycerol 3-phosphate: step 3/3. Functionally, catalyzes the conversion of phosphatidic acid (PA) to CDP-diacylglycerol (CDP-DAG), an essential intermediate in the synthesis of phosphatidylglycerol, cardiolipin and phosphatidylinositol. Exhibits specificity for the nature of the acyl chains at the sn-1 and sn-2 positions in the substrate, PA and the preferred acyl chain composition is 1-stearoyl-2-arachidonoyl-sn-phosphatidic acid. Plays an important role in regulating the growth and maturation of lipid droplets which are storage organelles at the center of lipid and energy homeostasis. The protein is Phosphatidate cytidylyltransferase 2 of Rattus norvegicus (Rat).